The following is a 1065-amino-acid chain: Valine--tRNA ligase, mitochondrial (1065 aa).

The N-terminal 15 residues, 1–15, are a transit peptide targeting the mitochondrion; it reads MPHLPLASFRPPLWG. The interval 27-52 is disordered; the sequence is ALCTQPEPHGSPVSRRNREAKQKRLR. The span at 42–52 shows a compositional bias: basic and acidic residues; it reads RNREAKQKRLR. Positions 146–156 match the 'HIGH' region motif; it reads PNVTGSLHIGH. A 'KMSKS' region motif is present at residues 659-663; sequence KMSKS. Lys662 is a binding site for ATP.

This sequence belongs to the class-I aminoacyl-tRNA synthetase family.

The protein localises to the mitochondrion. It catalyses the reaction tRNA(Val) + L-valine + ATP = L-valyl-tRNA(Val) + AMP + diphosphate. Catalyzes the attachment of valine to tRNA(Val) in a two-step reaction: valine is first activated by ATP to form Val-AMP and then transferred to the acceptor end of tRNA(Val). This chain is Valine--tRNA ligase, mitochondrial (Vars2), found in Rattus norvegicus (Rat).